Consider the following 333-residue polypeptide: Fatty acid hydroxylase domain-containing protein 2 (333 aa).

6 helical membrane-spanning segments follow: residues 29-49, 77-97, 134-154, 168-188, 215-235, and 237-257; these read FILG…TWHL, ILFF…FNGL, TVLF…YPFL, FHWF…LFYY, VISL…PAIV, and PLVM…ALII. One can recognise a Fatty acid hydroxylase domain in the interval 176 to 299; the sequence is AIFTLIEEVL…LGVLDHLHGT (124 aa).

This sequence belongs to the sterol desaturase family.

It is found in the cytoplasm. The protein localises to the membrane. In terms of biological role, promotes megakaryocyte differentiation by enhancing ERK phosphorylation and up-regulating RUNX1 expression. The polypeptide is Fatty acid hydroxylase domain-containing protein 2 (FAXDC2) (Macaca fascicularis (Crab-eating macaque)).